The following is a 123-amino-acid chain: Small ribosomal subunit protein uS12cz/uS12cy (123 aa).

Belongs to the universal ribosomal protein uS12 family. Part of the 30S ribosomal subunit.

The protein resides in the plastid. Its subcellular location is the chloroplast. With S4 and S5 plays an important role in translational accuracy. Located at the interface of the 30S and 50S subunits. This chain is Small ribosomal subunit protein uS12cz/uS12cy (rps12-A), found in Phaseolus vulgaris (Kidney bean).